A 742-amino-acid polypeptide reads, in one-letter code: G2/M phase-specific E3 ubiquitin-protein ligase (742 aa).

Residues 10–50 (SPPCVLCGWTDNCPEKYGEKRTYVEYNLTLHNYCLLMSSGI) form a C2HC pre-PHD-type zinc finger. A PHD-type 1 zinc finger spans residues 78–127 (LMCNICRKKGASIGCVAPKCKRSYHFPCGLQKECVFQFMEDFRSYCWEHK). Residues 142 to 192 (QCTICLDLVEHLPLYSVLRSPCCKNTWFHRECLQYQALSAGIFFFRCAVCN) form a PHD-type 2; degenerate zinc finger. The PHD-type 3 zinc finger occupies 236-285 (RCLCKNGRDYNKPDSKWEIKRCQSCGSRGTHLACSSIKSWEQNWECVECR). Positions 417 to 742 (KGFRQRNFRP…IRSTLRGERE (326 aa)) constitute an HECT domain.

Its subcellular location is the nucleus. It localises to the nucleolus. The protein localises to the cytoplasm. It carries out the reaction S-ubiquitinyl-[E2 ubiquitin-conjugating enzyme]-L-cysteine + [acceptor protein]-L-lysine = [E2 ubiquitin-conjugating enzyme]-L-cysteine + N(6)-ubiquitinyl-[acceptor protein]-L-lysine.. The protein operates within protein modification; protein ubiquitination. Functionally, E3 ubiquitin-protein ligase which accepts ubiquitin from an E2 ubiquitin-conjugating enzyme in the form of a thioester and then directly transfers the ubiquitin to targeted substrates. Essential in early embryonic development to prevent apoptotic death. The chain is G2/M phase-specific E3 ubiquitin-protein ligase (G2E3) from Gallus gallus (Chicken).